Here is a 241-residue protein sequence, read N- to C-terminus: Trypsin-10 (241 aa).

A signal peptide spans Met-1–Val-13. The propeptide at Phe-14–Lys-19 is activation peptide. A Peptidase S1 domain is found at Ile-20–Ala-239. Cystine bridges form between Cys-26–Cys-155, Cys-44–Cys-60, Cys-128–Cys-228, Cys-135–Cys-201, Cys-166–Cys-180, and Cys-191–Cys-215. Residues His-59 and Asp-103 each act as charge relay system in the active site. The active-site Charge relay system is the Ser-195.

This sequence belongs to the peptidase S1 family.

It is found in the secreted. Its subcellular location is the extracellular space. The enzyme catalyses Preferential cleavage: Arg-|-Xaa, Lys-|-Xaa.. This chain is Trypsin-10, found in Gadus morhua (Atlantic cod).